Here is a 417-residue protein sequence, read N- to C-terminus: D-galactonate dehydratase family member SeV_A0456 (417 aa).

Substrate is bound by residues glutamine 43 and histidine 127. Catalysis depends on tyrosine 158, which acts as the Proton donor/acceptor. Aspartate 223 serves as a coordination point for Mg(2+). Histidine 225 (proton donor/acceptor) is an active-site residue. Residues glutamate 249 and glutamate 275 each contribute to the Mg(2+) site. Substrate-binding residues include glutamate 275, arginine 296, histidine 325, aspartate 329, and glutamate 352.

It belongs to the mandelate racemase/muconate lactonizing enzyme family. GalD subfamily. Requires Mg(2+) as cofactor.

The enzyme catalyses D-gluconate = 2-dehydro-3-deoxy-D-gluconate + H2O. In terms of biological role, has low D-gluconate dehydratase activity (in vitro), suggesting that it has no significant role in D-gluconate degradation in vivo. Has no detectable activity with a panel of 70 other acid sugars (in vitro). The chain is D-galactonate dehydratase family member SeV_A0456 from Salmonella virchow (strain SL491).